The primary structure comprises 767 residues: uncharacterized protein (767 aa).

Disordered regions lie at residues 171–209 (LPVW…LRTP), 314–340 (ETEA…CQEE), and 533–566 (RDHG…PRGF). Composition is skewed to basic and acidic residues over residues 322–331 (PDPRPEKDAK) and 552–564 (ETKD…RDPR).

This is an uncharacterized protein from Homo sapiens (Human).